The chain runs to 494 residues: Glutamyl-tRNA reductase (494 aa).

Substrate contacts are provided by residues 58-61 (TCNR), serine 118, 123-125 (EQQ), and glutamine 129. Cysteine 59 serves as the catalytic Nucleophile. 205–210 (GAGAMA) provides a ligand contact to NADP(+). Positions 448-494 (KGANAGSGQRKKQKPQENRVSTARAVYRSTYQDLTQASTPGGKDDDQ) are disordered. Polar residues predominate over residues 476-486 (STYQDLTQAST).

It belongs to the glutamyl-tRNA reductase family. Homodimer.

The enzyme catalyses (S)-4-amino-5-oxopentanoate + tRNA(Glu) + NADP(+) = L-glutamyl-tRNA(Glu) + NADPH + H(+). It participates in porphyrin-containing compound metabolism; protoporphyrin-IX biosynthesis; 5-aminolevulinate from L-glutamyl-tRNA(Glu): step 1/2. Functionally, catalyzes the NADPH-dependent reduction of glutamyl-tRNA(Glu) to glutamate 1-semialdehyde (GSA). The chain is Glutamyl-tRNA reductase from Corynebacterium urealyticum (strain ATCC 43042 / DSM 7109).